We begin with the raw amino-acid sequence, 2179 residues long: Genome polyprotein (2179 aa).

Residues 1–20 (MGAQVSTQKSGSHENQNILT) form a disordered region. A lipid anchor (N-myristoyl glycine; by host) is attached at Gly2. Residues 2–1491 (GAQVSTQKSG…AMNQASMIIN (1490 aa)) lie on the Cytoplasmic side of the membrane. The segment at 564–584 (ALTEGLGDELEEVIVEKTKQT) is amphipathic alpha-helix. Catalysis depends on for protease 2A activity residues His876 and Asp894. Residues Cys911 and Cys913 each coordinate Zn(2+). Catalysis depends on Cys965, which acts as the For protease 2A activity. Zn(2+) is bound by residues Cys971 and His973. The tract at residues 1101–1173 (NDGWFRKFND…HISNPTQEKR (73 aa)) is membrane-binding. The oligomerization stretch occupies residues 1101 to 1239 (NDGWFRKFND…TPGSGKSLTT (139 aa)). The RNA-binding stretch occupies residues 1122–1126 (ANKIS). An SF3 helicase domain is found at 1205-1361 (KNKMVNYMQF…TTYTKNGKLN (157 aa)). Zn(2+) is bound by residues Cys1369, Cys1372, Cys1381, and Cys1386. A C4-type zinc finger spans residues 1369–1386 (CKDCHQPSNFKKCCPLVC). The segment at 1413 to 1420 (DFKSKMQI) is RNA-binding. Residues 1424-1429 (LETLFQ) are oligomerization. An intramembrane segment occupies 1492 to 1507 (TILMFVSTLGIVYVIY). Topologically, residues 1508–2179 (KLFAQTQGPY…VLRRRWLDLF (672 aa)) are cytoplasmic. O-(5'-phospho-RNA)-tyrosine is present on Tyr1517. A Peptidase C3 domain is found at 1538-1715 (GPNTEFALSL…FSAQLKKQYF (178 aa)). Catalysis depends on for protease 3C activity residues His1577, Glu1608, and Cys1683. In terms of domain architecture, RdRp catalytic spans 1946–2060 (GHLMAFDYSN…SYPYELDPQV (115 aa)). Mg(2+) is bound by residues Asp1952 and Asp2046.

It belongs to the picornaviruses polyprotein family. As to quaternary structure, interacts with capsid protein VP1 and capsid protein VP3 to form heterotrimeric protomers. Interacts with capsid protein VP0, and capsid protein VP3 to form heterotrimeric protomers. Five protomers subsequently associate to form pentamers which serve as building blocks for the capsid. Interacts with capsid protein VP2, capsid protein VP3 and capsid protein VP4 following cleavage of capsid protein VP0. Interacts with host ICAM1. In terms of assembly, interacts with capsid protein VP1 and capsid protein VP3 in the mature capsid. As to quaternary structure, interacts with capsid protein VP0 and capsid protein VP1 to form heterotrimeric protomers. Five protomers subsequently associate to form pentamers which serve as building blocks for the capsid. Interacts with capsid protein VP4 in the mature capsid. Interacts with protein 2C; this interaction may be important for virion morphogenesis. Interacts with capsid protein VP1 and capsid protein VP3. In terms of assembly, homodimer. As to quaternary structure, homohexamer; forms a hexameric ring structure with 6-fold symmetry characteristic of AAA+ ATPases. Interacts (via N-terminus) with host RTN3 (via reticulon domain); this interaction is important for viral replication. Interacts with capsid protein VP3; this interaction may be important for virion morphogenesis. Interacts with protein 3CD. In terms of assembly, homodimer. Interacts with host GBF1. Interacts (via GOLD domain) with host ACBD3 (via GOLD domain); this interaction allows the formation of a viral protein 3A/ACBD3 heterotetramer with a 2:2 stoichiometry, which will stimulate the recruitment of host PI4KB in order to synthesize PI4P at the viral RNA replication sites. As to quaternary structure, interacts with RNA-directed RNA polymerase. Interacts with protein 3AB and with RNA-directed RNA polymerase. In terms of assembly, interacts with Viral protein genome-linked and with protein 3CD. The cofactor is Mg(2+). Post-translationally, specific enzymatic cleavages in vivo by the viral proteases yield processing intermediates and the mature proteins. Myristoylation is required for the formation of pentamers during virus assembly. Further assembly of 12 pentamers and a molecule of genomic RNA generates the provirion. In terms of processing, during virion maturation, immature virions are rendered infectious following cleavage of VP0 into VP4 and VP2. This maturation seems to be an autocatalytic event triggered by the presence of RNA in the capsid and it is followed by a conformational change infectious virion. Post-translationally, myristoylation is required during RNA encapsidation and formation of the mature virus particle. VPg is uridylylated by the polymerase into VPg-pUpU. This acts as a nucleotide-peptide primer for the genomic RNA replication.

The protein localises to the virion. The protein resides in the host cytoplasm. It is found in the host cytoplasmic vesicle membrane. It localises to the host nucleus. The enzyme catalyses a ribonucleoside 5'-triphosphate + H2O = a ribonucleoside 5'-diphosphate + phosphate + H(+). It catalyses the reaction Selective cleavage of Tyr-|-Gly bond in the picornavirus polyprotein.. The catalysed reaction is RNA(n) + a ribonucleoside 5'-triphosphate = RNA(n+1) + diphosphate. It carries out the reaction Selective cleavage of Gln-|-Gly bond in the poliovirus polyprotein. In other picornavirus reactions Glu may be substituted for Gln, and Ser or Thr for Gly.. Its activity is regulated as follows. Replication or transcription is subject to high level of random mutations by the nucleotide analog ribavirin. In terms of biological role, forms an icosahedral capsid of pseudo T=3 symmetry with capsid proteins VP2 and VP3. The capsid is 300 Angstroms in diameter, composed of 60 copies of each capsid protein and enclosing the viral positive strand RNA genome. Capsid protein VP1 mainly forms the vertices of the capsid. Capsid protein VP1 interacts with host ICAM1 to provide virion attachment to target host cells. This attachment induces virion internalization. Tyrosine kinases are probably involved in the entry process. After binding to its receptor, the capsid undergoes conformational changes. Capsid protein VP1 N-terminus (that contains an amphipathic alpha-helix) and capsid protein VP4 are externalized. Together, they shape a pore in the host membrane through which viral genome is translocated to host cell cytoplasm. After genome has been released, the channel shrinks. Its function is as follows. Forms an icosahedral capsid of pseudo T=3 symmetry with capsid proteins VP2 and VP3. The capsid is 300 Angstroms in diameter, composed of 60 copies of each capsid protein and enclosing the viral positive strand RNA genome. Lies on the inner surface of the capsid shell. After binding to the host receptor, the capsid undergoes conformational changes. Capsid protein VP4 is released, Capsid protein VP1 N-terminus is externalized, and together, they shape a pore in the host membrane through which the viral genome is translocated into the host cell cytoplasm. Functionally, component of immature procapsids, which is cleaved into capsid proteins VP4 and VP2 after maturation. Allows the capsid to remain inactive before the maturation step. In terms of biological role, cysteine protease that cleaves viral polyprotein and specific host proteins. It is responsible for the autocatalytic cleavage between the P1 and P2 regions, which is the first cleavage occurring in the polyprotein. Also cleaves the host translation initiation factor EIF4G1, in order to shut down the capped cellular mRNA translation. Inhibits the host nucleus-cytoplasm protein and RNA trafficking by cleaving host members of the nuclear pores including NUP62 and NUP153. Counteracts stress granule formation probably by antagonizing its assembly or promoting its dissassembly. Its function is as follows. Plays an essential role in the virus replication cycle by acting as a viroporin. Creates a pore in the host endoplasmic reticulum and as a consequence releases Ca2+ in the cytoplasm of infected cell. In turn, high levels of cytoplasmic calcium may trigger membrane trafficking and transport of viral ER-associated proteins to viroplasms, sites of viral genome replication. Induces and associates with structural rearrangements of intracellular membranes. Displays RNA-binding, nucleotide binding and NTPase activities. May play a role in virion morphogenesis and viral RNA encapsidation by interacting with the capsid protein VP3. Functionally, localizes the viral replication complex to the surface of membranous vesicles. Together with protein 3CD binds the Cis-Active RNA Element (CRE) which is involved in RNA synthesis initiation. Acts as a cofactor to stimulate the activity of 3D polymerase, maybe through a nucleid acid chaperone activity. In terms of biological role, localizes the viral replication complex to the surface of membranous vesicles. It inhibits host cell endoplasmic reticulum-to-Golgi apparatus transport and causes the disassembly of the Golgi complex, possibly through GBF1 interaction. This would result in depletion of MHC, trail receptors and IFN receptors at the host cell surface. Plays an essential role in viral RNA replication by recruiting ACBD3 and PI4KB at the viral replication sites, thereby allowing the formation of the rearranged membranous structures where viral replication takes place. Its function is as follows. Acts as a primer for viral RNA replication and remains covalently bound to viral genomic RNA. VPg is uridylylated prior to priming replication into VPg-pUpU. The oriI viral genomic sequence may act as a template for this. The VPg-pUpU is then used as primer on the genomic RNA poly(A) by the RNA-dependent RNA polymerase to replicate the viral genome. During genome replication, the VPg-RNA linkage is removed by the host TDP2, thereby accelerating replication. During the late stage of the replication cycle, host TDP2 is excluded from sites of viral RNA synthesis and encapsidation, allowing for the generation of progeny virions. Involved in the viral replication complex and viral polypeptide maturation. It exhibits protease activity with a specificity and catalytic efficiency that is different from protease 3C. Protein 3CD lacks polymerase activity. Protein 3CD binds to the 5'UTR of the viral genome. Functionally, major viral protease that mediates proteolytic processing of the polyprotein. Cleaves host EIF5B, contributing to host translation shutoff. Cleaves also host PABPC1, contributing to host translation shutoff. Cleaves host NLRP1, triggers host N-glycine-mediated degradation of the autoinhibitory NLRP1 N-terminal fragment. In terms of biological role, replicates the viral genomic RNA on the surface of intracellular membranes. May form linear arrays of subunits that propagate along a strong head-to-tail interaction called interface-I. Covalently attaches UMP to a tyrosine of VPg, which is used to prime RNA synthesis. The positive stranded RNA genome is first replicated at virus induced membranous vesicles, creating a dsRNA genomic replication form. This dsRNA is then used as template to synthesize positive stranded RNA genomes. ss(+)RNA genomes are either translated, replicated or encapsidated. This chain is Genome polyprotein, found in Homo sapiens (Human).